Reading from the N-terminus, the 130-residue chain is Small ribosomal subunit protein eS6 (130 aa).

A disordered region spans residues 78 to 98 (SGPPGFRPERKGERRRKTVRG).

Belongs to the eukaryotic ribosomal protein eS6 family.

The polypeptide is Small ribosomal subunit protein eS6 (Methanopyrus kandleri (strain AV19 / DSM 6324 / JCM 9639 / NBRC 100938)).